A 284-amino-acid polypeptide reads, in one-letter code: NAD/NADP-dependent indole-3-acetaldehyde reductase (284 aa).

Residue D49 participates in NADPH binding. Residues Y54 and H109 each act as proton donor in the active site. 10 residues coordinate NADPH: S143, Q165, L196, R201, T239, T240, T241, S242, K243, and R246.

It belongs to the aldo/keto reductase family. In terms of assembly, monomer.

Its subcellular location is the cytoplasm. The protein resides in the nucleus. It carries out the reaction indole-3-ethanol + NAD(+) = indole-3-acetaldehyde + NADH + H(+). The enzyme catalyses indole-3-ethanol + NADP(+) = indole-3-acetaldehyde + NADPH + H(+). The sequence is that of NAD/NADP-dependent indole-3-acetaldehyde reductase from Schizosaccharomyces pombe (strain 972 / ATCC 24843) (Fission yeast).